Reading from the N-terminus, the 183-residue chain is NADH-ubiquinone oxidoreductase chain 5 (183 aa).

Helical transmembrane passes span phenylalanine 7 to serine 27, leucine 30 to threonine 50, alanine 111 to glycine 131, and threonine 144 to alanine 164.

The protein belongs to the complex I subunit 5 family.

It localises to the mitochondrion inner membrane. The catalysed reaction is a ubiquinone + NADH + 5 H(+)(in) = a ubiquinol + NAD(+) + 4 H(+)(out). In terms of biological role, core subunit of the mitochondrial membrane respiratory chain NADH dehydrogenase (Complex I) that is believed to belong to the minimal assembly required for catalysis. Complex I functions in the transfer of electrons from NADH to the respiratory chain. The immediate electron acceptor for the enzyme is believed to be ubiquinone. The protein is NADH-ubiquinone oxidoreductase chain 5 (NDH5) of Pisum sativum (Garden pea).